The chain runs to 2217 residues: Protein irg-7 (2217 aa).

An N-terminal signal peptide occupies residues 1–16 (MRNWVLIAALAVICLA). EGF-like domains follow at residues 370–405 (SGST…FHCQ) and 864–896 (TGTY…ESCE). Intrachain disulfides connect Cys-379-Cys-393, Cys-395-Cys-404, Cys-868-Cys-873, Cys-886-Cys-895, Cys-1212-Cys-1312, Cys-1285-Cys-1304, Cys-1508-Cys-1521, and Cys-1523-Cys-1532. A C-type lectin domain is found at 1188–1313 (IGQYCIKFMA…CAEPRAFACQ (126 aa)). Residues 1499 to 1533 (TGSRCTVPICVNGGTRNPDEATCSCPDGYEGPNCQ) form the EGF-like 3 domain. Positions 2016 to 2202 (DVVFMIDGSQ…NNQIKTIQQL (187 aa)) constitute a VWFA domain.

Its subcellular location is the secreted. Its function is as follows. Plays a role in innate immunity, probably via the atf-7 pathway, to confer resistance to pathogenic bacteria. May also play a role in the regulation of longevity. This chain is Protein irg-7, found in Caenorhabditis elegans.